The chain runs to 276 residues: MGIKKYNPTTNGRRNMTTNDFAEITTDRPEKSLLAPLSKKAGRNNQGKITVRHQGGGHKRQYRIIDFKRNKDGIPGRVATIEYDPNRSANIALINYVDGEKRYILAPKTLEVGMEVMSGPESDIKIGNALPLINIPVGTVVHNIELKPGRGGQLVRSAGTSAQVLGKEGKYVLVRLTSGEVRLVLSACRASIGQVGNEQHELIKIGKAGRSRWLGKRPTVRGSVMNPVDHPHGGGEGRSPIGRKSPMSPWGKPTLGFKTRKKNKASDKFIVRRRKK.

Disordered regions lie at residues 1–20 (MGIKKYNPTTNGRRNMTTND) and 219–276 (TVRG…RRKK). Residues 7 to 20 (NPTTNGRRNMTTND) are compositionally biased toward polar residues.

The protein belongs to the universal ribosomal protein uL2 family. In terms of assembly, part of the 50S ribosomal subunit. Forms a bridge to the 30S subunit in the 70S ribosome.

Its function is as follows. One of the primary rRNA binding proteins. Required for association of the 30S and 50S subunits to form the 70S ribosome, for tRNA binding and peptide bond formation. It has been suggested to have peptidyltransferase activity; this is somewhat controversial. Makes several contacts with the 16S rRNA in the 70S ribosome. In Bacillus mycoides (strain KBAB4) (Bacillus weihenstephanensis), this protein is Large ribosomal subunit protein uL2.